A 588-amino-acid polypeptide reads, in one-letter code: Protein kinase C iota type (588 aa).

The 84-residue stretch at 18-101 (QVRVKAYYRG…SELIIHVFPC (84 aa)) folds into the PB1 domain. The Phorbol-ester/DAG-type zinc-finger motif lies at 133–183 (GHAFQAKRFNRRAHCAICTDRIWGLGRQGYKCINCKLLVHKKCHKLVTVEC). The disordered stretch occupies residues 194-213 (GRIDPGSTHPEHPDQVLGKK). Positions 246 to 514 (FDLLRVIGRG…FADIMAHPFF (269 aa)) constitute a Protein kinase domain. Residues 252–260 (IGRGSYAKV) and Lys275 each bind ATP. Asp370 acts as the Proton acceptor in catalysis. Phosphothreonine occurs at positions 404 and 556. The 72-residue stretch at 515-586 (RNVDWDLMEQ…INPLLMSAEE (72 aa)) folds into the AGC-kinase C-terminal domain.

It belongs to the protein kinase superfamily. AGC Ser/Thr protein kinase family. PKC subfamily.

It carries out the reaction L-seryl-[protein] + ATP = O-phospho-L-seryl-[protein] + ADP + H(+). The enzyme catalyses L-threonyl-[protein] + ATP = O-phospho-L-threonyl-[protein] + ADP + H(+). With respect to regulation, exhibits an elevated basal enzymatic activity and is not regulated by diacylglycerol, phosphatidylserine, phorbol esters or calcium ions. Two specific sites, Thr-404 (activation loop of the kinase domain) and Thr-556 (turn motif), need to be phosphorylated for its full activation. Calcium- and diacylglycerol-independent serine/ threonine-protein kinase that plays a general protective role against apoptotic stimuli, is involved in NF-kappa-B activation, cell survival, differentiation and polarity, and contributes to the regulation of microtubule dynamics in the early secretory pathway. Is required for the formation and maintenance of the zonula adherens during early epithelial development and plays a critical role in organ morphogenesis and in regulating the orientation of cell division. Required for polarized epithelial organization, myocardium coherence and cell connectivity in the early somite stages. Required for heart cone tilt and development of circulatory architecture during embryogenesis. The sequence is that of Protein kinase C iota type (prkci) from Danio rerio (Zebrafish).